The following is a 404-amino-acid chain: Cysteine--tRNA ligase (404 aa).

Residue cysteine 14 coordinates Zn(2+). Residues 16–26 carry the 'HIGH' region motif; that stretch reads PTVYSDVHIGN. Zn(2+) contacts are provided by cysteine 190, histidine 216, and glutamate 220. The short motif at 248-252 is the 'KMSKS' region element; the sequence is KMAKS. Lysine 251 contacts ATP.

Belongs to the class-I aminoacyl-tRNA synthetase family. In terms of assembly, monomer. Zn(2+) serves as cofactor.

The protein localises to the cytoplasm. It carries out the reaction tRNA(Cys) + L-cysteine + ATP = L-cysteinyl-tRNA(Cys) + AMP + diphosphate. The sequence is that of Cysteine--tRNA ligase from Mesomycoplasma hyopneumoniae (strain 232) (Mycoplasma hyopneumoniae).